Here is a 54-residue protein sequence, read N- to C-terminus: Putative ATP synthase subunit epsilon, mitochondrial (54 aa).

The protein belongs to the eukaryotic ATPase epsilon family. F-type ATPases have 2 components, CF(1) - the catalytic core - and CF(0) - the membrane proton channel. CF(1) has five subunits: alpha(3), beta(3), gamma(1), delta(1), epsilon(1). CF(0) seems to have nine subunits: a, b, c, d, e, f, g, F6 and 8 (or A6L).

Its subcellular location is the mitochondrion. It localises to the mitochondrion inner membrane. Mitochondrial membrane ATP synthase (F(1)F(0) ATP synthase or Complex V) produces ATP from ADP in the presence of a proton gradient across the membrane which is generated by electron transport complexes of the respiratory chain. F-type ATPases consist of two structural domains, F(1) - containing the extramembraneous catalytic core, and F(0) - containing the membrane proton channel, linked together by a central stalk and a peripheral stalk. During catalysis, ATP synthesis in the catalytic domain of F(1) is coupled via a rotary mechanism of the central stalk subunits to proton translocation. Part of the complex F(1) domain and of the central stalk which is part of the complex rotary element. Rotation of the central stalk against the surrounding alpha(3)beta(3) subunits leads to hydrolysis of ATP in three separate catalytic sites on the beta subunits. This Caenorhabditis elegans protein is Putative ATP synthase subunit epsilon, mitochondrial.